The sequence spans 485 residues: UDP-glycosyltransferase 71B2 (485 aa).

Residues S287, 354-356, 371-379, and 393-396 contribute to the UDP-alpha-D-glucose site; these read APQ, HCGWNSTLE, and YAEQ.

This sequence belongs to the UDP-glycosyltransferase family.

Functionally, glucosyltransferase that glucosylates the cell wall inhibitor hypostatin in vivo to form a bioactive glucoside. This is UDP-glycosyltransferase 71B2 (UGT71B2) from Arabidopsis thaliana (Mouse-ear cress).